Here is a 499-residue protein sequence, read N- to C-terminus: Taxadiene 5-alpha hydroxylase (499 aa).

Residues 22 to 42 traverse the membrane as a helical; Signal-anchor segment; it reads TESFSIALSAIAGILLLLLLF. Cys-445 lines the heme pocket.

Belongs to the cytochrome P450 family. Requires heme as cofactor.

The protein resides in the membrane. The enzyme catalyses taxa-4(5),11(12)-diene + reduced [NADPH--hemoprotein reductase] + O2 = taxa-4(20),11-dien-5alpha-ol + oxidized [NADPH--hemoprotein reductase] + H2O + H(+). It participates in alkaloid biosynthesis; taxol biosynthesis; taxa-4(20),11-dien-5alpha-ol from geranylgeranyl diphosphate: step 2/2. Its function is as follows. Catalyzes the first oxygenation step of taxol biosynthesis. Can use both taxa-4(5),11(12)-diene and taxa-4(20),11(12)-diene as substrate. The sequence is that of Taxadiene 5-alpha hydroxylase from Taxus cuspidata (Japanese yew).